Here is a 668-residue protein sequence, read N- to C-terminus: Metastasis-associated protein MTA2 (668 aa).

Positions 1–144 (MAANMYRVGD…PVQKTLLADQ (144 aa)) constitute a BAH domain. 2 positions are modified to phosphoserine: Ser-52 and Ser-54. Positions 145 to 256 (GEIRVGCKFQ…KAMSTLVPQG (112 aa)) constitute an ELM2 domain. Lys-152 bears the N6-acetyllysine mark. Residues 263 to 315 (DEMEEWSASEAMLFEEALEKYGKDFNDIRQDFLPWKSLASIVQFYYMWKTTDR) form the SANT domain. Residues 367-394 (CESCHTTQSAQWYAWGPPNMQCRLCASC) form a GATA-type; atypical zinc finger. Residues 412-437 (GAARGTTEPHSRGHLSRPEAQSLSPY) form a disordered region. Phosphoserine is present on residues Ser-433 and Ser-435. Residue Lys-460 is modified to N6-acetyllysine. Lys-492 is covalently cross-linked (Glycyl lysine isopeptide (Lys-Gly) (interchain with G-Cter in SUMO2 and SUMO3); alternate). Lys-492 is covalently cross-linked (Glycyl lysine isopeptide (Lys-Gly) (interchain with G-Cter in SUMO2); alternate). Residue Lys-508 forms a Glycyl lysine isopeptide (Lys-Gly) (interchain with G-Cter in SUMO2) linkage. Lys-522 and Lys-531 each carry N6-acetyllysine. Phosphothreonine is present on Thr-534. Glycyl lysine isopeptide (Lys-Gly) (interchain with G-Cter in SUMO2) cross-links involve residues Lys-559 and Lys-595. 2 disordered regions span residues 580–599 (ASGI…LNPA) and 647–668 (PPVP…VLED).

It belongs to the metastasis-associated protein family. In terms of assembly, component of the nucleosome remodeling and deacetylase (NuRD) repressor complex, composed of core proteins MTA1, MTA2, MTA3, RBBP4, RBBP7, HDAC1, HDAC2, MBD2, MBD3, and peripherally associated proteins CDK2AP1, CDK2AP2, GATAD2A, GATAD2B, CHD3, CHD4 and CHD5. The exact stoichiometry of the NuRD complex is unknown, and some subunits such as MBD2 and MBD3, GATAD2A and GATAD2B, and CHD3, CHD4 and CHD5 define mutually exclusive NuRD complexes. Interacts with CHD3. Interacts with CHD4. Interacts with GATAD2A. Interacts with HDAC7. Interacts with MBD3. Interacts with p53/TP53. Interacts with MINT. Interacts with PIMREG. Interacts with NACC2. Interacts with ERCC6. Interacts with PWWP2B. Interacts with transcription factor BCL11A.

It is found in the nucleus. May function as a transcriptional coregulator. Acts as a component of the histone deacetylase NuRD complex which participates in the remodeling of chromatin. In Mus musculus (Mouse), this protein is Metastasis-associated protein MTA2 (Mta2).